A 217-amino-acid polypeptide reads, in one-letter code: MNQTLLSEFGSPLERVERALEALRAGKGVMVLDDENRENEGDMVFVAETMTTEQMAMSIRHGSGIVCVCITEERRQQLDLPMMVENNTSHFHTAFTVTIEAAQGVTTGVSAADRLTTVRAAAADNAKPSDLNRPGHVFPLRAQPGGVLTRGGHTEASIDLATLAGFKPVAVLCELTNDDGTMARAPEVVTFAKQHDMPVLTIEDLVAYRLREEKKAG.

Residues Arg37–Glu38, Asp42, Arg150–Thr154, and Glu174 each bind D-ribulose 5-phosphate. Residue Glu38 participates in Mg(2+) binding. His153 is a binding site for Mg(2+).

Belongs to the DHBP synthase family. Homodimer. Mg(2+) is required as a cofactor. Requires Mn(2+) as cofactor.

It catalyses the reaction D-ribulose 5-phosphate = (2S)-2-hydroxy-3-oxobutyl phosphate + formate + H(+). It functions in the pathway cofactor biosynthesis; riboflavin biosynthesis; 2-hydroxy-3-oxobutyl phosphate from D-ribulose 5-phosphate: step 1/1. Catalyzes the conversion of D-ribulose 5-phosphate to formate and 3,4-dihydroxy-2-butanone 4-phosphate. This is 3,4-dihydroxy-2-butanone 4-phosphate synthase from Proteus mirabilis (strain HI4320).